Reading from the N-terminus, the 623-residue chain is uncharacterized protein (623 aa).

The stretch at 24 to 51 (RALVQKDELAQASQDVEDMRDCYDSLLN) forms a coiled coil. 5 disordered regions span residues 148–170 (TRQREKGRSKGGKGETFSPQQLQ), 240–343 (FSGL…TTPP), 362–393 (ALPTPVETTRSPSSTTSPGHKNVGSSNPTKAI), 454–531 (SFSG…LGYS), and 585–607 (KKLGTPSPPLTPMSLIHPPPQAL). Over residues 243–259 (LEDDDGDDEIENNENDG) the composition is skewed to acidic residues. Over residues 328–343 (VSQSAPLFPENRTTPP) the composition is skewed to polar residues. Residues 364 to 379 (PTPVETTRSPSSTTSP) are compositionally biased toward low complexity. Residues 384-393 (VGSSNPTKAI) are compositionally biased toward polar residues. The segment covering 484 to 495 (PVSKLPKVSSSP) has biased composition (low complexity). Residues 496–506 (TASPTFVSTPK) are compositionally biased toward polar residues. The segment covering 590–606 (PSPPLTPMSLIHPPPQA) has biased composition (pro residues).

This is an uncharacterized protein from Arabidopsis thaliana (Mouse-ear cress).